Consider the following 119-residue polypeptide: Large ribosomal subunit protein bL20 (119 aa).

Belongs to the bacterial ribosomal protein bL20 family.

Binds directly to 23S ribosomal RNA and is necessary for the in vitro assembly process of the 50S ribosomal subunit. It is not involved in the protein synthesizing functions of that subunit. This chain is Large ribosomal subunit protein bL20, found in Chloroflexus aggregans (strain MD-66 / DSM 9485).